The primary structure comprises 131 residues: Small ribosomal subunit protein uS8 (131 aa).

The protein belongs to the universal ribosomal protein uS8 family. Part of the 30S ribosomal subunit. Contacts proteins S5 and S12.

Its function is as follows. One of the primary rRNA binding proteins, it binds directly to 16S rRNA central domain where it helps coordinate assembly of the platform of the 30S subunit. This is Small ribosomal subunit protein uS8 from Malacoplasma penetrans (strain HF-2) (Mycoplasma penetrans).